The primary structure comprises 462 residues: UDP-N-acetylmuramoylalanine--D-glutamate ligase (462 aa).

109–115 (GTDGKST) provides a ligand contact to ATP.

This sequence belongs to the MurCDEF family.

The protein resides in the cytoplasm. The catalysed reaction is UDP-N-acetyl-alpha-D-muramoyl-L-alanine + D-glutamate + ATP = UDP-N-acetyl-alpha-D-muramoyl-L-alanyl-D-glutamate + ADP + phosphate + H(+). The protein operates within cell wall biogenesis; peptidoglycan biosynthesis. Cell wall formation. Catalyzes the addition of glutamate to the nucleotide precursor UDP-N-acetylmuramoyl-L-alanine (UMA). The sequence is that of UDP-N-acetylmuramoylalanine--D-glutamate ligase from Leptospira borgpetersenii serovar Hardjo-bovis (strain JB197).